The sequence spans 319 residues: Acetylglutamate kinase (319 aa).

Substrate is bound by residues 74–75 (GG), Arg-96, and Asn-210.

This sequence belongs to the acetylglutamate kinase family. ArgB subfamily.

It localises to the cytoplasm. The catalysed reaction is N-acetyl-L-glutamate + ATP = N-acetyl-L-glutamyl 5-phosphate + ADP. The protein operates within amino-acid biosynthesis; L-arginine biosynthesis; N(2)-acetyl-L-ornithine from L-glutamate: step 2/4. Its function is as follows. Catalyzes the ATP-dependent phosphorylation of N-acetyl-L-glutamate. The sequence is that of Acetylglutamate kinase from Pseudarthrobacter chlorophenolicus (strain ATCC 700700 / DSM 12829 / CIP 107037 / JCM 12360 / KCTC 9906 / NCIMB 13794 / A6) (Arthrobacter chlorophenolicus).